The sequence spans 150 residues: Large ribosomal subunit protein uL13 (150 aa).

Residues 130 to 150 (EHPHSAQNPQVLSITTNELVK) form a disordered region. Over residues 134–150 (SAQNPQVLSITTNELVK) the composition is skewed to polar residues.

This sequence belongs to the universal ribosomal protein uL13 family. Part of the 50S ribosomal subunit.

Its function is as follows. This protein is one of the early assembly proteins of the 50S ribosomal subunit, although it is not seen to bind rRNA by itself. It is important during the early stages of 50S assembly. In Prochlorococcus marinus (strain SARG / CCMP1375 / SS120), this protein is Large ribosomal subunit protein uL13.